Consider the following 116-residue polypeptide: Proline-rich protein 9 (116 aa).

The sequence is that of Proline-rich protein 9 (PRR9) from Homo sapiens (Human).